An 80-amino-acid chain; its full sequence is Conotoxin VnMSGL-0121 (80 aa).

The signal sequence occupies residues 1-20 (MSGLGIMVLTLLLLVSMATS). A propeptide spanning residues 21–44 (HQDGGGKQATQRDAINVRRRRSIT) is cleaved from the precursor. Disulfide bonds link cysteine 52–cysteine 65, cysteine 56–cysteine 74, and cysteine 64–cysteine 78. Phenylalanine amide is present on phenylalanine 79.

The protein belongs to the conotoxin O3 superfamily. In terms of tissue distribution, expressed by the venom duct.

Its subcellular location is the secreted. The polypeptide is Conotoxin VnMSGL-0121 (Conus ventricosus (Mediterranean cone)).